Consider the following 440-residue polypeptide: Thymidine phosphorylase (440 aa).

The protein belongs to the thymidine/pyrimidine-nucleoside phosphorylase family. Homodimer.

It carries out the reaction thymidine + phosphate = 2-deoxy-alpha-D-ribose 1-phosphate + thymine. It participates in pyrimidine metabolism; dTMP biosynthesis via salvage pathway; dTMP from thymine: step 1/2. In terms of biological role, the enzymes which catalyze the reversible phosphorolysis of pyrimidine nucleosides are involved in the degradation of these compounds and in their utilization as carbon and energy sources, or in the rescue of pyrimidine bases for nucleotide synthesis. In Shigella boydii serotype 4 (strain Sb227), this protein is Thymidine phosphorylase.